A 243-amino-acid polypeptide reads, in one-letter code: E3 ubiquitin-protein ligase RMA3 (243 aa).

Residues 44–92 form an RING-type zinc finger; the sequence is CNICLDTAHDPVVTLCGHLFCWPCIYKWLHVQLSSVSVDQHQNNCPVCK. Residues 110–135 form a disordered region; sequence SPSSTFGSKKQDALSTDIPRRPAPSA. The chain crosses the membrane as a helical; Anchor for type IV membrane protein span at residues 223–243; the sequence is KSLNRVSIFFLCCIILCLLLF.

In terms of tissue distribution, ubiquitous. Highly expressed in roots.

Its subcellular location is the endoplasmic reticulum membrane. It carries out the reaction S-ubiquitinyl-[E2 ubiquitin-conjugating enzyme]-L-cysteine + [acceptor protein]-L-lysine = [E2 ubiquitin-conjugating enzyme]-L-cysteine + N(6)-ubiquitinyl-[acceptor protein]-L-lysine.. It participates in protein modification; protein ubiquitination. Its function is as follows. E3 ubiquitin-protein ligase. In Arabidopsis thaliana (Mouse-ear cress), this protein is E3 ubiquitin-protein ligase RMA3 (RMA3).